Reading from the N-terminus, the 453-residue chain is CCA-adding enzyme (453 aa).

Residues Ser53 and Lys56 each coordinate ATP. CTP-binding residues include Ser53 and Lys56. 3 residues coordinate Mg(2+): Asp65, Asp67, and Asp119. Positions 142, 161, and 170 each coordinate ATP. His142, Lys161, and Tyr170 together coordinate CTP.

The protein belongs to the tRNA nucleotidyltransferase/poly(A) polymerase family. Archaeal CCA-adding enzyme subfamily. In terms of assembly, homodimer. It depends on Mg(2+) as a cofactor.

It catalyses the reaction a tRNA precursor + 2 CTP + ATP = a tRNA with a 3' CCA end + 3 diphosphate. The catalysed reaction is a tRNA with a 3' CCA end + 2 CTP + ATP = a tRNA with a 3' CCACCA end + 3 diphosphate. Functionally, catalyzes the addition and repair of the essential 3'-terminal CCA sequence in tRNAs without using a nucleic acid template. Adds these three nucleotides in the order of C, C, and A to the tRNA nucleotide-73, using CTP and ATP as substrates and producing inorganic pyrophosphate. tRNA 3'-terminal CCA addition is required both for tRNA processing and repair. Also involved in tRNA surveillance by mediating tandem CCA addition to generate a CCACCA at the 3' terminus of unstable tRNAs. While stable tRNAs receive only 3'-terminal CCA, unstable tRNAs are marked with CCACCA and rapidly degraded. This Pyrococcus furiosus (strain ATCC 43587 / DSM 3638 / JCM 8422 / Vc1) protein is CCA-adding enzyme.